The following is a 421-amino-acid chain: Inhibitor of growth protein 3 (421 aa).

The disordered stretch occupies residues 129–164; the sequence is PSQPVNNHHAHSHTPVEKRKYNPTSHHTATDHIPEK. Residues lysine 148, lysine 165, and lysine 167 each participate in a glycyl lysine isopeptide (Lys-Gly) (interchain with G-Cter in SUMO2) cross-link. Residue lysine 181 is modified to N6-acetyllysine. Residue lysine 256 forms a Glycyl lysine isopeptide (Lys-Gly) (interchain with G-Cter in SUMO2) linkage. Lysine 264 bears the N6-acetyllysine mark. The segment at 286 to 324 is disordered; sequence TQNASSSAADSRSGRKSKNNTKSSSQQSSSSSSSSSSSS. Over residues 308–324 the composition is skewed to low complexity; that stretch reads SSSQQSSSSSSSSSSSS. The PHD-type zinc-finger motif lies at 363-412; the sequence is PRYCICNQVSYGEMVGCDNQDCPIEWFHYGCVGLTEAPKGKWFCPQCTAA. Zn(2+) contacts are provided by cysteine 366, cysteine 368, cysteine 379, cysteine 384, histidine 390, cysteine 393, cysteine 406, and cysteine 409.

This sequence belongs to the ING family. Interacts with H3K4me3 and to a lesser extent with H3K4me2. Component of the NuA4 histone acetyltransferase complex which contains the catalytic subunit KAT5/TIP60 and the subunits EP400, TRRAP/PAF400, BRD8/SMAP, EPC1, DMAP1/DNMAP1, RUVBL1/TIP49, RUVBL2, ING3, actin, ACTL6A/BAF53A, MORF4L1/MRG15, MORF4L2/MRGX, MRGBP, YEATS4/GAS41, VPS72/YL1 and MEAF6. The NuA4 complex interacts with MYC. HTATTIP/TIP60, EPC1, and ING3 together constitute a minimal HAT complex termed Piccolo NuA4. Component of a SWR1-like complex.

It localises to the nucleus. Functionally, component of the NuA4 histone acetyltransferase (HAT) complex which is involved in transcriptional activation of select genes principally by acetylation of nucleosomal histones H4 and H2A. This modification may both alter nucleosome - DNA interactions and promote interaction of the modified histones with other proteins which positively regulate transcription. This complex may be required for the activation of transcriptional programs associated with oncogene and proto-oncogene mediated growth induction, tumor suppressor mediated growth arrest and replicative senescence, apoptosis, and DNA repair. NuA4 may also play a direct role in DNA repair when directly recruited to sites of DNA damage. Component of a SWR1-like complex that specifically mediates the removal of histone H2A.Z/H2AZ1 from the nucleosome. This is Inhibitor of growth protein 3 (Ing3) from Rattus norvegicus (Rat).